Consider the following 131-residue polypeptide: Major pollen allergen Pla l 1 (131 aa).

Intrachain disulfides connect Cys17-Cys86, Cys20-Cys131, and Cys42-Cys74. The Zn(2+) site is built by His21, Asp45, Asp73, and Glu88. An N-linked (GlcNAc...) asparagine glycan is attached at Asn107.

Belongs to the Ole e I family. In terms of processing, exists in two variants: glycosylated and non-glycosylated. Carries a complex, major N-linked glycan, with a alpha-1,3-fucose residue in its structure and probably also a beta-1,2-xylose. The average modification of molecular mass due to glycosylation is approximately 969 Da.

It localises to the secreted. In Plantago lanceolata (English plantain), this protein is Major pollen allergen Pla l 1.